Here is a 91-residue protein sequence, read N- to C-terminus: Acylphosphatase (91 aa).

One can recognise an Acylphosphatase-like domain in the interval 3–90; that stretch reads QYRIIVDGRV…EGHHRFSIVY (88 aa). Residues Arg-18 and Asn-36 contribute to the active site.

The protein belongs to the acylphosphatase family.

It catalyses the reaction an acyl phosphate + H2O = a carboxylate + phosphate + H(+). This Bacillus subtilis (strain 168) protein is Acylphosphatase (acyP).